The chain runs to 296 residues: Phosphatidylserine decarboxylase proenzyme (296 aa).

Residues Asp100, His157, and Ser263 each act as charge relay system; for autoendoproteolytic cleavage activity in the active site. Ser263 functions as the Schiff-base intermediate with substrate; via pyruvic acid; for decarboxylase activity in the catalytic mechanism. Residue Ser263 is modified to Pyruvic acid (Ser); by autocatalysis.

The protein belongs to the phosphatidylserine decarboxylase family. PSD-B subfamily. Prokaryotic type I sub-subfamily. As to quaternary structure, heterodimer of a large membrane-associated beta subunit and a small pyruvoyl-containing alpha subunit. Requires pyruvate as cofactor. Is synthesized initially as an inactive proenzyme. Formation of the active enzyme involves a self-maturation process in which the active site pyruvoyl group is generated from an internal serine residue via an autocatalytic post-translational modification. Two non-identical subunits are generated from the proenzyme in this reaction, and the pyruvate is formed at the N-terminus of the alpha chain, which is derived from the carboxyl end of the proenzyme. The autoendoproteolytic cleavage occurs by a canonical serine protease mechanism, in which the side chain hydroxyl group of the serine supplies its oxygen atom to form the C-terminus of the beta chain, while the remainder of the serine residue undergoes an oxidative deamination to produce ammonia and the pyruvoyl prosthetic group on the alpha chain. During this reaction, the Ser that is part of the protease active site of the proenzyme becomes the pyruvoyl prosthetic group, which constitutes an essential element of the active site of the mature decarboxylase.

Its subcellular location is the cell membrane. The catalysed reaction is a 1,2-diacyl-sn-glycero-3-phospho-L-serine + H(+) = a 1,2-diacyl-sn-glycero-3-phosphoethanolamine + CO2. It participates in phospholipid metabolism; phosphatidylethanolamine biosynthesis; phosphatidylethanolamine from CDP-diacylglycerol: step 2/2. Its function is as follows. Catalyzes the formation of phosphatidylethanolamine (PtdEtn) from phosphatidylserine (PtdSer). This chain is Phosphatidylserine decarboxylase proenzyme, found in Actinobacillus pleuropneumoniae serotype 7 (strain AP76).